Consider the following 711-residue polypeptide: Glycine--tRNA ligase beta subunit (711 aa).

Belongs to the class-II aminoacyl-tRNA synthetase family. As to quaternary structure, tetramer of two alpha and two beta subunits.

It localises to the cytoplasm. It catalyses the reaction tRNA(Gly) + glycine + ATP = glycyl-tRNA(Gly) + AMP + diphosphate. The protein is Glycine--tRNA ligase beta subunit of Polaromonas naphthalenivorans (strain CJ2).